We begin with the raw amino-acid sequence, 681 residues long: Translation factor GUF1 homolog, chloroplastic (681 aa).

A chloroplast-targeting transit peptide spans 1 to 51; that stretch reads MAMASAMDLSSPPTFFLSGTSTSSPSLRRLSSISVSGFRRHSNRKLQILCQ. The tr-type G domain maps to 84 to 265; it reads SNIRNFSIIA…AIVQRIPAPL (182 aa). GTP-binding positions include 93 to 100, 158 to 162, and 212 to 215; these read AHIDHGKS, DTPGH, and NKID.

Belongs to the TRAFAC class translation factor GTPase superfamily. Classic translation factor GTPase family. LepA subfamily.

It is found in the plastid. The protein resides in the chloroplast. The enzyme catalyses GTP + H2O = GDP + phosphate + H(+). In terms of biological role, promotes chloroplast protein synthesis. May act as a fidelity factor of the translation reaction, by catalyzing a one-codon backward translocation of tRNAs on improperly translocated ribosomes. In Arabidopsis thaliana (Mouse-ear cress), this protein is Translation factor GUF1 homolog, chloroplastic.